We begin with the raw amino-acid sequence, 698 residues long: Methionine--tRNA ligase (698 aa).

Residues 21–31 carry the 'HIGH' region motif; the sequence is PYANGPLHFGH. Residues cysteine 153, cysteine 156, cysteine 166, and cysteine 169 each contribute to the Zn(2+) site. The 'KMSKS' region motif lies at 341 to 345; the sequence is QFSKS. Lysine 344 contributes to the ATP binding site. A tRNA-binding domain is found at 599-698; that stretch reads DFRKLDLRVG…EDVAPGSLVS (100 aa).

This sequence belongs to the class-I aminoacyl-tRNA synthetase family. MetG type 1 subfamily. Homodimer. Requires Zn(2+) as cofactor.

Its subcellular location is the cytoplasm. It catalyses the reaction tRNA(Met) + L-methionine + ATP = L-methionyl-tRNA(Met) + AMP + diphosphate. Its function is as follows. Is required not only for elongation of protein synthesis but also for the initiation of all mRNA translation through initiator tRNA(fMet) aminoacylation. In Protochlamydia amoebophila (strain UWE25), this protein is Methionine--tRNA ligase.